The chain runs to 520 residues: Putative cytochrome P450 CYP13A5 (520 aa).

Residue Cys-464 participates in heme binding.

Belongs to the cytochrome P450 family. The cofactor is heme.

Cytochromes P450 are a group of heme-thiolate monooxygenases. They oxidize a variety of structurally unrelated compounds, including steroids, fatty acids, and xenobiotics. The sequence is that of Putative cytochrome P450 CYP13A5 (cyp-13A5) from Caenorhabditis elegans.